Consider the following 214-residue polypeptide: Small ribosomal subunit protein uS5 (214 aa).

In terms of domain architecture, S5 DRBM spans 54–117; the sequence is LKYEVVDIKV…RDAKMNIIPV (64 aa).

Belongs to the universal ribosomal protein uS5 family. As to quaternary structure, part of the 30S ribosomal subunit. Contacts protein S4.

With S4 and S12 plays an important role in translational accuracy. This is Small ribosomal subunit protein uS5 from Saccharolobus solfataricus (strain ATCC 35092 / DSM 1617 / JCM 11322 / P2) (Sulfolobus solfataricus).